Here is a 142-residue protein sequence, read N- to C-terminus: MGVMDGLWRWLGVEREEVREEIIELPAYSEENQRGPTNVVSIHSNKTFKVVVCEPESFDEVQVLADHLKSRKQLILNFDNTPPEVSQRIIDFISGTTYSLEGHSQQLGKNIFIFTPSNVEIAKDHRSLMRKHGFANPFGGEK.

Belongs to the SepF family. As to quaternary structure, homodimer. Interacts with FtsZ.

It localises to the cytoplasm. Its function is as follows. Cell division protein that is part of the divisome complex and is recruited early to the Z-ring. Probably stimulates Z-ring formation, perhaps through the cross-linking of FtsZ protofilaments. Its function overlaps with FtsA. The sequence is that of Cell division protein SepF from Syntrophomonas wolfei subsp. wolfei (strain DSM 2245B / Goettingen).